The primary structure comprises 103 residues: Pilin (103 aa).

The signal sequence occupies residues 1–30 (MYRFACRTLMLAACILATGVAGLGVGAQSA). Over residues 61 to 76 (HDDFHRDSDGPDHSRD) the composition is skewed to basic and acidic residues. The interval 61 to 103 (HDDFHRDSDGPDHSRDYPGPILEGPVLDDPGAAPPPPAAGGGA) is disordered. Residues 92–103 (AAPPPPAAGGGA) are compositionally biased toward pro residues.

It belongs to the mycobacterial pilin family. Forms a homomer composed of subunits assembled in a large structure.

The protein resides in the fimbrium. In terms of biological role, structural subunit of pili, which are thin, flexible, coiled-coil, aggregative fibers. Mediates adhesion to the extracellular matrix, an event that would facilitate direct interaction with the host epithelium during infection in the lung or other tissues. In Mycobacterium bovis (strain ATCC BAA-935 / AF2122/97), this protein is Pilin (mtp).